The primary structure comprises 317 residues: Beta-ketoacyl-[acyl-carrier-protein] synthase III (317 aa).

Residues C112 and H244 contribute to the active site. The tract at residues 245–249 (QANLR) is ACP-binding. N274 is an active-site residue.

It belongs to the thiolase-like superfamily. FabH family. In terms of assembly, homodimer.

It is found in the cytoplasm. It catalyses the reaction malonyl-[ACP] + acetyl-CoA + H(+) = 3-oxobutanoyl-[ACP] + CO2 + CoA. It functions in the pathway lipid metabolism; fatty acid biosynthesis. Catalyzes the condensation reaction of fatty acid synthesis by the addition to an acyl acceptor of two carbons from malonyl-ACP. Catalyzes the first condensation reaction which initiates fatty acid synthesis and may therefore play a role in governing the total rate of fatty acid production. Possesses both acetoacetyl-ACP synthase and acetyl transacylase activities. Its substrate specificity determines the biosynthesis of branched-chain and/or straight-chain of fatty acids. The protein is Beta-ketoacyl-[acyl-carrier-protein] synthase III of Sodalis glossinidius (strain morsitans).